A 458-amino-acid chain; its full sequence is Repulsive guidance molecule A (458 aa).

Residues 1-53 (MGGPGPRRAGTSRERLVVTGRAGWMGMGRGAGRSALGFWPTLAFLLCSFPAAT) form the signal peptide. The propeptide at 54–176 (SPCKILKCNS…NYTHCGLFGD (123 aa)) is removed in mature form. Residues 121–133 (HNCSKDGPTSQPR) show a composition bias toward polar residues. Residues 121-149 (HNCSKDGPTSQPRLHTLPPAGDSQERSDS) are disordered. N-linked (GlcNAc...) asparagine glycans are attached at residues N122 and N167. Cystine bridges form between C153–C234 and C171–C323. A glycan (N-linked (GlcNAc...) asparagine) is linked at N397. The GPI-anchor amidated alanine moiety is linked to residue A433. Positions 434–458 (AGLPLAPQPLLGALILLLALFPVFC) are cleaved as a propeptide — removed in mature form.

The protein belongs to the repulsive guidance molecule (RGM) family. Interacts with NEO1, BMP2 and BMP4. In terms of processing, autocatalytically cleaved at low pH; the two chains remain linked via two disulfide bonds.

It localises to the cell membrane. Its function is as follows. Member of the repulsive guidance molecule (RGM) family that performs several functions in the developing and adult nervous system. Regulates cephalic neural tube closure, inhibits neurite outgrowth and cortical neuron branching, and the formation of mature synapses. Binding to its receptor NEO1/neogenin induces activation of RHOA-ROCK1/Rho-kinase signaling pathway through UNC5B-ARHGEF12/LARG-PTK2/FAK1 cascade, leading to collapse of the neuronal growth cone and neurite outgrowth inhibition. Furthermore, RGMA binding to NEO1/neogenin leads to HRAS inactivation by influencing HRAS-PTK2/FAK1-AKT1 pathway. It also functions as a bone morphogenetic protein (BMP) coreceptor that may signal through SMAD1, SMAD5, and SMAD8. This chain is Repulsive guidance molecule A (RGMA), found in Macaca fascicularis (Crab-eating macaque).